Consider the following 588-residue polypeptide: Urease subunit alpha (588 aa).

Residues 149 to 588 enclose the Urease domain; that stretch reads GGIDTHIHFI…LPMAQRYFLF (440 aa). Positions 154, 156, and 237 each coordinate Ni(2+). K237 carries the post-translational modification N6-carboxylysine. Residue H239 participates in substrate binding. Positions 266 and 292 each coordinate Ni(2+). H340 acts as the Proton donor in catalysis. Ni(2+) is bound at residue D380.

The protein belongs to the metallo-dependent hydrolases superfamily. Urease alpha subunit family. In terms of assembly, heterotrimer of UreA (gamma), UreB (beta) and UreC (alpha) subunits. Three heterotrimers associate to form the active enzyme. Ni cation is required as a cofactor. Post-translationally, carboxylation allows a single lysine to coordinate two nickel ions.

The protein resides in the cytoplasm. It catalyses the reaction urea + 2 H2O + H(+) = hydrogencarbonate + 2 NH4(+). The protein operates within nitrogen metabolism; urea degradation; CO(2) and NH(3) from urea (urease route): step 1/1. This Opitutus terrae (strain DSM 11246 / JCM 15787 / PB90-1) protein is Urease subunit alpha.